The primary structure comprises 245 residues: Phycocyanobilin:ferredoxin oxidoreductase (245 aa).

It belongs to the HY2 family.

It carries out the reaction (2R,3Z)-phycocyanobilin + 4 oxidized [2Fe-2S]-[ferredoxin] = biliverdin IXalpha + 4 reduced [2Fe-2S]-[ferredoxin] + 4 H(+). In terms of biological role, catalyzes the four-electron reduction of biliverdin IX-alpha (2-electron reduction at both the A and D rings); the reaction proceeds via an isolatable 2-electron intermediate, 181,182-dihydrobiliverdin. This is Phycocyanobilin:ferredoxin oxidoreductase from Gloeothece citriformis (strain PCC 7424) (Cyanothece sp. (strain PCC 7424)).